We begin with the raw amino-acid sequence, 59 residues long: Large ribosomal subunit protein bL32c (59 aa).

Residues 1–19 (MAVPKKRTSKAKKNARKAN) are compositionally biased toward basic residues. The tract at residues 1 to 24 (MAVPKKRTSKAKKNARKANWKNQA) is disordered.

The protein belongs to the bacterial ribosomal protein bL32 family.

The protein localises to the plastid. Its subcellular location is the chloroplast. This Porphyra purpurea (Red seaweed) protein is Large ribosomal subunit protein bL32c (rpl32).